A 333-amino-acid polypeptide reads, in one-letter code: DNA-directed RNA polymerase subunit alpha (333 aa).

The alpha N-terminal domain (alpha-NTD) stretch occupies residues 1 to 234 (MQISVNEFLT…QQLAAFVDLK (234 aa)). The tract at residues 248–333 (IDPILLRPVD…SLKKDDKATA (86 aa)) is alpha C-terminal domain (alpha-CTD).

This sequence belongs to the RNA polymerase alpha chain family. As to quaternary structure, homodimer. The RNAP catalytic core consists of 2 alpha, 1 beta, 1 beta' and 1 omega subunit. When a sigma factor is associated with the core the holoenzyme is formed, which can initiate transcription.

The catalysed reaction is RNA(n) + a ribonucleoside 5'-triphosphate = RNA(n+1) + diphosphate. Functionally, DNA-dependent RNA polymerase catalyzes the transcription of DNA into RNA using the four ribonucleoside triphosphates as substrates. In Pseudomonas fluorescens (strain Pf0-1), this protein is DNA-directed RNA polymerase subunit alpha.